A 178-amino-acid polypeptide reads, in one-letter code: Dual-action ribosomal maturation protein DarP (178 aa).

It belongs to the DarP family.

It localises to the cytoplasm. Member of a network of 50S ribosomal subunit biogenesis factors which assembles along the 30S-50S interface, preventing incorrect 23S rRNA structures from forming. Promotes peptidyl transferase center (PTC) maturation. In Haemophilus influenzae (strain 86-028NP), this protein is Dual-action ribosomal maturation protein DarP.